We begin with the raw amino-acid sequence, 100 residues long: Small ribosomal subunit protein uS14c (100 aa).

Belongs to the universal ribosomal protein uS14 family. As to quaternary structure, part of the 30S ribosomal subunit.

It is found in the plastid. It localises to the chloroplast. Functionally, binds 16S rRNA, required for the assembly of 30S particles. The polypeptide is Small ribosomal subunit protein uS14c (Amborella trichopoda).